Consider the following 264-residue polypeptide: uncharacterized protein (264 aa).

Helical transmembrane passes span 43 to 63 (VVAA…LYLI), 68 to 88 (FLPS…LLGI), 96 to 116 (ILPA…LGCI), and 150 to 170 (LAAK…VLAV). A disordered region spans residues 216–247 (SYEDALKNSSQQPSTSSSSSSPPSRPPHSVYT). Over residues 224–237 (SSQQPSTSSSSSSP) the composition is skewed to low complexity.

It localises to the membrane. This is an uncharacterized protein from Caenorhabditis elegans.